A 152-amino-acid chain; its full sequence is Xanthine-guanine phosphoribosyltransferase (152 aa).

5-phospho-alpha-D-ribose 1-diphosphate is bound by residues 37–38 and 88–96; these read RG and DDLVDTGNT. Aspartate 89 is a binding site for Mg(2+). Guanine-binding residues include aspartate 92 and isoleucine 135. Xanthine contacts are provided by aspartate 92 and isoleucine 135. Residues 92–96 and 134–135 contribute to the GMP site; these read DTGNT and WI.

This sequence belongs to the purine/pyrimidine phosphoribosyltransferase family. XGPT subfamily. Homotetramer. Mg(2+) is required as a cofactor.

It is found in the cell inner membrane. It carries out the reaction GMP + diphosphate = guanine + 5-phospho-alpha-D-ribose 1-diphosphate. The enzyme catalyses XMP + diphosphate = xanthine + 5-phospho-alpha-D-ribose 1-diphosphate. It catalyses the reaction IMP + diphosphate = hypoxanthine + 5-phospho-alpha-D-ribose 1-diphosphate. It functions in the pathway purine metabolism; GMP biosynthesis via salvage pathway; GMP from guanine: step 1/1. Its pathway is purine metabolism; XMP biosynthesis via salvage pathway; XMP from xanthine: step 1/1. Purine salvage pathway enzyme that catalyzes the transfer of the ribosyl-5-phosphate group from 5-phospho-alpha-D-ribose 1-diphosphate (PRPP) to the N9 position of the 6-oxopurines guanine and xanthine to form the corresponding ribonucleotides GMP (guanosine 5'-monophosphate) and XMP (xanthosine 5'-monophosphate), with the release of PPi. To a lesser extent, also acts on hypoxanthine. This is Xanthine-guanine phosphoribosyltransferase from Actinobacillus succinogenes (strain ATCC 55618 / DSM 22257 / CCUG 43843 / 130Z).